A 3390-amino-acid polypeptide reads, in one-letter code: Genome polyprotein (3390 aa).

Residues 1–15 are interaction with host EXOC1; that stretch reads MNNQRKKTGKPSINM. Topologically, residues 1–100 are cytoplasmic; sequence MNNQRKKTGK…MLSIINKRKK (100 aa). The hydrophobic; homodimerization of capsid protein C stretch occupies residues 37–72; the sequence is LLNGQGPMKLVMAFIAFLRFLAIPPTAGVLARWGTF. Residues 101–114 constitute a propeptide, ER anchor for the capsid protein C, removed in mature form by serine protease NS3; that stretch reads TSLCLMMMLPATLA. The chain crosses the membrane as a helical span at residues 101 to 118; sequence TSLCLMMMLPATLAFHLT. Residues 119–243 are Extracellular-facing; that stretch reads SRDGEPRMIV…VEKVETWALR (125 aa). N183 is a glycosylation site (N-linked (GlcNAc...) asparagine; by host). Residues 244–264 form a helical membrane-spanning segment; sequence HPGFTILALFLAHYIGTSLTQ. Residue K265 is a topological domain, cytoplasmic. A helical membrane pass occupies residues 266–280; the sequence is VVIFILLMLVTPSMT. Topologically, residues 281–723 are extracellular; that stretch reads MRCVGVGNRD…VHQIFGSAYT (443 aa). 4 disulfides stabilise this stretch: C283–C310, C340–C401, C354–C385, and C372–C396. N347 carries N-linked (GlcNAc...) asparagine; by host glycosylation. Residues 378 to 391 form a fusion peptide region; it reads DRGWGNGCGLFGKG. N433 carries N-linked (GlcNAc...) asparagine; by host glycosylation. Disulfide bonds link C463–C563 and C580–C611. Residues 724–744 traverse the membrane as a helical segment; it reads ALFSGVSWIMKIGIGVLLTWI. Residues 745-750 lie on the Cytoplasmic side of the membrane; that stretch reads GLNSKN. The helical transmembrane segment at 751 to 771 threads the bilayer; sequence TSMSFSCIAIGIITLYLGVVV. Topologically, residues 772-1193 are extracellular; sequence QADMGCVINW…MIGSNASDRM (422 aa). Cystine bridges form between C777–C788, C828–C916, C952–C996, C1053–C1102, C1064–C1086, and C1085–C1089. Residues N903 and N980 are each glycosylated (N-linked (GlcNAc...) asparagine; by host). N1132 and N1188 each carry an N-linked (GlcNAc...) asparagine; by host glycan. A helical membrane pass occupies residues 1194–1218; the sequence is GMGVTYLALIATFKIQPFLALGFFL. The Cytoplasmic segment spans residues 1219–1224; that stretch reads RKLTSR. Residues 1225-1243 traverse the membrane as a helical segment; sequence ENLLLGVGLAMAATLRLPE. The Lumenal segment spans residues 1244 to 1267; that stretch reads DIEQMANGIALGLMALKLITQFET. A helical membrane pass occupies residues 1268–1288; it reads YQLWTALVSLTCSNTIFTLTV. Residue A1289 is a topological domain, cytoplasmic. The helical transmembrane segment at 1290 to 1308 threads the bilayer; sequence WRTATLILAGISLLPVCQS. Over 1309–1315 the chain is Lumenal; sequence SSMRKTD. The chain crosses the membrane as a helical span at residues 1316–1336; the sequence is WLPMTVAAMGVPPLPLFIFSL. Residues 1337-1344 are Cytoplasmic-facing; that stretch reads KDTLKRRS. Residues 1345-1365 form a helical membrane-spanning segment; it reads WPLNEGVMAVGLVSILASSLL. Residues 1366-1368 lie on the Lumenal side of the membrane; the sequence is RND. Residues 1369-1389 form a helical membrane-spanning segment; the sequence is VPMAGPLVAGGLLIACYVITG. Over 1390–1443 the chain is Cytoplasmic; the sequence is TSADLTVEKAADVTWEEEAEQTGVSHNLMITVDDDGTMRIKDDETENILTVLLK. The interacts with and activates NS3 protease stretch occupies residues 1396–1435; it reads VEKAADVTWEEEAEQTGVSHNLMITVDDDGTMRIKDDETE. An intramembrane region (helical) is located at residues 1444–1464; the sequence is TALLIVSGIFPYSIPATMLVW. The Cytoplasmic portion of the chain corresponds to 1465–2146; that stretch reads HTWQKQTQRS…VEELPETMET (682 aa). The region spanning 1474–1651 is the Peptidase S7 domain; sequence SGVLWDVPSP…NAEPDGPTPE (178 aa). Active-site charge relay system; for serine protease NS3 activity residues include H1524, D1548, and S1608. A Helicase ATP-binding domain is found at 1654-1810; it reads EEMFKKRNLT…QSNAPIQDEE (157 aa). The interval 1658-1661 is important for RNA-binding; it reads KKRN. 1667 to 1674 is an ATP binding site; that stretch reads LHPGSGKT. The short motif at 1758–1761 is the DEAH box element; that stretch reads DEAH. The Helicase C-terminal domain maps to 1821–1986; sequence GNEWITDFVG…GIIPALFEPE (166 aa). K1862 is modified (N6-acetyllysine; by host). Residues 2147–2167 form a helical membrane-spanning segment; the sequence is LLLLGLMILLTGGAMLFLISG. Residues 2168–2169 lie on the Lumenal side of the membrane; the sequence is KG. Residues 2170-2190 constitute an intramembrane region (helical); the sequence is IGKTSIGLICVIASSGMLWMA. Residue D2191 is a topological domain, lumenal. The chain crosses the membrane as a helical span at residues 2192–2212; that stretch reads VPLQWIASAIVLEFFMMVLLI. Over 2213-2227 the chain is Cytoplasmic; the sequence is PEPEKQRTPQDNQLA. A helical transmembrane segment spans residues 2228-2248; the sequence is YVVIGILTLAAIVAANEMGLL. Residues 2249–2273 lie on the Lumenal side of the membrane; it reads ETTKRDLGMSKEPGVVSPTSYLDVD. Positions 2274–2294 form an intramembrane region, helical; that stretch reads LHPASAWTLYAVATTVITPML. Over 2295 to 2305 the chain is Lumenal; that stretch reads RHTIENSTANV. Residues N2300 and N2304 are each glycosylated (N-linked (GlcNAc...) asparagine; by host). The segment at residues 2306-2326 is an intramembrane region (helical); it reads SLAAIANQAVVLMGLDKGWPI. The Lumenal segment spans residues 2327–2346; that stretch reads SKMDLGVPLLALGCYSQVNP. The chain crosses the membrane as a helical span at residues 2347-2367; sequence LTLIAAVLLLVTHYAIIGPGL. At 2368–2412 the chain is on the cytoplasmic side; the sequence is QAKATREAQKRTAAGIMKNPTVDGIMTIDLDPVIYDSKFEKQLGQ. The helical transmembrane segment at 2413–2433 threads the bilayer; the sequence is VMLLVLCAVQLLLMRTSWALC. At 2434 to 2458 the chain is on the lumenal side; sequence EVLTLATGPITTLWEGSPGKFWNTT. N2456 carries N-linked (GlcNAc...) asparagine; by host glycosylation. The chain crosses the membrane as a helical span at residues 2459–2479; that stretch reads IAVSMANIFRGSYLAGAGLAL. Residues 2480-3390 are Cytoplasmic-facing; it reads SIMKSVGTGK…KEEESEGAIW (911 aa). The mRNA cap 0-1 NS5-type MT domain occupies 2492-2753; it reads TGSQGETLGE…DVDLGAGTRH (262 aa). S-adenosyl-L-methionine is bound at residue S2546. Position 2546 is a phosphoserine (S2546). K2551 functions as the For 2'-O-MTase activity in the catalytic mechanism. An SUMO-interacting motif motif is present at residues 2567–2570; sequence VIDL. S-adenosyl-L-methionine-binding residues include G2576, W2577, T2594, K2595, D2621, and V2622. Catalysis depends on D2636, which acts as the For 2'-O-MTase activity. I2637 contributes to the S-adenosyl-L-methionine binding site. Catalysis depends on for 2'-O-MTase activity residues K2670 and E2706. Y2708 contacts S-adenosyl-L-methionine. Residues E2927, H2931, C2936, and C2939 each contribute to the Zn(2+) site. The RdRp catalytic domain maps to 3018–3168; that stretch reads AMYADDTAGW…PIDDRFANAL (151 aa). Positions 3202, 3218, and 3337 each coordinate Zn(2+).

This sequence in the N-terminal section; belongs to the class I-like SAM-binding methyltransferase superfamily. mRNA cap 0-1 NS5-type methyltransferase family. In terms of assembly, homodimer. Interacts (via N-terminus) with host EXOC1 (via C-terminus); this interaction results in EXOC1 degradation through the proteasome degradation pathway. Forms heterodimers with envelope protein E in the endoplasmic reticulum and Golgi. As to quaternary structure, homodimer; in the endoplasmic reticulum and Golgi. Interacts with protein prM. Interacts with non-structural protein 1. In terms of assembly, homodimer; Homohexamer when secreted. Interacts with envelope protein E. Interacts (via N-terminus) with serine protease NS3. As to quaternary structure, forms a heterodimer with serine protease NS3. May form homooligomers. In terms of assembly, forms a heterodimer with NS2B. Interacts with NS4B. Interacts with unphosphorylated RNA-directed RNA polymerase NS5; this interaction stimulates RNA-directed RNA polymerase NS5 guanylyltransferase activity. Interacts with host SHFL. Interacts with host MAVS; this interaction inhibits the synthesis of IFN-beta. Interacts with host SHFL. Interacts with host AUP1; the interaction occurs in the presence of Dengue virus NS4B and induces lipophagy which facilitates production of virus progeny particles. As to quaternary structure, interacts with serine protease NS3. In terms of assembly, homodimer. Interacts with host STAT2; this interaction inhibits the phosphorylation of the latter, and, when all viral proteins are present (polyprotein), targets STAT2 for degradation. Interacts with serine protease NS3. Specific enzymatic cleavages in vivo yield mature proteins. Cleavages in the lumen of endoplasmic reticulum are performed by host signal peptidase, whereas cleavages in the cytoplasmic side are performed by serine protease NS3. Signal cleavage at the 2K-4B site requires a prior NS3 protease-mediated cleavage at the 4A-2K site. In terms of processing, cleaved in post-Golgi vesicles by a host furin, releasing the mature small envelope protein M, and peptide pr. This cleavage is incomplete as up to 30% of viral particles still carry uncleaved prM. Post-translationally, N-glycosylated. N-glycosylated. The excreted form is glycosylated and this is required for efficient secretion of the protein from infected cells. In terms of processing, acetylated by host KAT5. Acetylation modulates NS3 RNA-binding and unwinding activities and plays an important positive role for viral replication. Post-translationally, sumoylation of RNA-directed RNA polymerase NS5 increases NS5 protein stability allowing proper viral RNA replication. Phosphorylated on serines residues. This phosphorylation may trigger NS5 nuclear localization.

It is found in the virion. The protein localises to the host nucleus. The protein resides in the host cytoplasm. Its subcellular location is the host perinuclear region. It localises to the secreted. It is found in the virion membrane. The protein localises to the host endoplasmic reticulum membrane. The protein resides in the host mitochondrion. The enzyme catalyses Selective hydrolysis of -Xaa-Xaa-|-Yaa- bonds in which each of the Xaa can be either Arg or Lys and Yaa can be either Ser or Ala.. The catalysed reaction is RNA(n) + a ribonucleoside 5'-triphosphate = RNA(n+1) + diphosphate. It carries out the reaction a ribonucleoside 5'-triphosphate + H2O = a ribonucleoside 5'-diphosphate + phosphate + H(+). It catalyses the reaction ATP + H2O = ADP + phosphate + H(+). The enzyme catalyses a 5'-end (5'-triphosphoguanosine)-ribonucleoside in mRNA + S-adenosyl-L-methionine = a 5'-end (N(7)-methyl 5'-triphosphoguanosine)-ribonucleoside in mRNA + S-adenosyl-L-homocysteine. The catalysed reaction is a 5'-end (N(7)-methyl 5'-triphosphoguanosine)-ribonucleoside in mRNA + S-adenosyl-L-methionine = a 5'-end (N(7)-methyl 5'-triphosphoguanosine)-(2'-O-methyl-ribonucleoside) in mRNA + S-adenosyl-L-homocysteine + H(+). Its function is as follows. Plays a role in virus budding by binding to the cell membrane and gathering the viral RNA into a nucleocapsid that forms the core of a mature virus particle. During virus entry, may induce genome penetration into the host cytoplasm after hemifusion induced by the surface proteins. Can migrate to the cell nucleus where it modulates host functions. Overcomes the anti-viral effects of host EXOC1 by sequestering and degrading the latter through the proteasome degradation pathway. Functionally, inhibits RNA silencing by interfering with host Dicer. Prevents premature fusion activity of envelope proteins in trans-Golgi by binding to envelope protein E at pH6.0. After virion release in extracellular space, gets dissociated from E dimers. In terms of biological role, acts as a chaperone for envelope protein E during intracellular virion assembly by masking and inactivating envelope protein E fusion peptide. prM is the only viral peptide matured by host furin in the trans-Golgi network probably to avoid catastrophic activation of the viral fusion activity in acidic Golgi compartment prior to virion release. prM-E cleavage is inefficient, and many virions are only partially matured. These uncleaved prM would play a role in immune evasion. Its function is as follows. May play a role in virus budding. Exerts cytotoxic effects by activating a mitochondrial apoptotic pathway through M ectodomain. May display a viroporin activity. Functionally, binds to host cell surface receptor and mediates fusion between viral and cellular membranes. Envelope protein is synthesized in the endoplasmic reticulum in the form of heterodimer with protein prM. They play a role in virion budding in the ER, and the newly formed immature particle is covered with 60 spikes composed of heterodimer between precursor prM and envelope protein E. The virion is transported to the Golgi apparatus where the low pH causes dissociation of PrM-E heterodimers and formation of E homodimers. prM-E cleavage is inefficient, and many virions are only partially matured. These uncleaved prM would play a role in immune evasion. Involved in immune evasion, pathogenesis and viral replication. Once cleaved off the polyprotein, is targeted to three destinations: the viral replication cycle, the plasma membrane and the extracellular compartment. Essential for viral replication. Required for formation of the replication complex and recruitment of other non-structural proteins to the ER-derived membrane structures. Excreted as a hexameric lipoparticle that plays a role against host immune response. Antagonizing the complement function. Binds to the host macrophages and dendritic cells. Inhibits signal transduction originating from Toll-like receptor 3 (TLR3). In terms of biological role, disrupts the host endothelial glycocalyx layer of host pulmonary microvascular endothelial cells, inducing degradation of sialic acid and shedding of heparan sulfate proteoglycans. NS1 induces expression of sialidases, heparanase, and activates cathepsin L, which activates heparanase via enzymatic cleavage. These effects are probably linked to the endothelial hyperpermeability observed in severe dengue disease. Its function is as follows. Component of the viral RNA replication complex that functions in virion assembly and antagonizes the host immune response. Functionally, required cofactor for the serine protease function of NS3. May have membrane-destabilizing activity and form viroporins. Displays three enzymatic activities: serine protease, NTPase and RNA helicase. NS3 serine protease, in association with NS2B, performs its autocleavage and cleaves the polyprotein at dibasic sites in the cytoplasm: C-prM, NS2A-NS2B, NS2B-NS3, NS3-NS4A, NS4A-2K and NS4B-NS5. NS3 RNA helicase binds RNA and unwinds dsRNA in the 3' to 5' direction. In terms of biological role, regulates the ATPase activity of the NS3 helicase activity. NS4A allows NS3 helicase to conserve energy during unwinding. Plays a role in the inhibition of the host innate immune response. Interacts with host MAVS and thereby prevents the interaction between RIGI and MAVS. In turn, IFN-beta production is impaired. Interacts with host AUP1 which mediates induction of lipophagy in host cells and facilitates production of virus progeny particles. Its function is as follows. Functions as a signal peptide for NS4B and is required for the interferon antagonism activity of the latter. Functionally, induces the formation of ER-derived membrane vesicles where the viral replication takes place. Inhibits interferon (IFN)-induced host STAT1 phosphorylation and nuclear translocation, thereby preventing the establishment of cellular antiviral state by blocking the IFN-alpha/beta pathway. Replicates the viral (+) and (-) RNA genome, and performs the capping of genomes in the cytoplasm. NS5 methylates viral RNA cap at guanine N-7 and ribose 2'-O positions. Besides its role in RNA genome replication, also prevents the establishment of cellular antiviral state by blocking the interferon-alpha/beta (IFN-alpha/beta) signaling pathway. Inhibits host TYK2 and STAT2 phosphorylation, thereby preventing activation of JAK-STAT signaling pathway. This Dengue virus type 3 (strain Philippines/H87/1956) (DENV-3) protein is Genome polyprotein.